Reading from the N-terminus, the 423-residue chain is AP-1 complex subunit mu-2 (423 aa).

Residues 168–421 form the MHD domain; sequence KNEVFIDVIE…ITQSGDYQLR (254 aa).

It belongs to the adaptor complexes medium subunit family. Adaptor protein complex 1 (AP-1) is a heterotetramer composed of two large adaptins (gamma-type subunit AP1G1 and beta-type subunit AP1B1), a medium adaptin (mu-type subunit AP1M1 or AP1M2) and a small adaptin (sigma-type subunit AP1S1 or AP1S2 or AP1S3). Interacts with P2X4. Phosphorylation of membrane-bound AP1M1/AP1M2 increases its affinity for sorting signals.

The protein localises to the golgi apparatus. It is found in the cytoplasmic vesicle. Its subcellular location is the clathrin-coated vesicle membrane. In terms of biological role, subunit of clathrin-associated adaptor protein complex 1 that plays a role in protein sorting in the trans-Golgi network (TGN) and endosomes. The AP complexes mediate the recruitment of clathrin to membranes and the recognition of sorting signals within the cytosolic tails of transmembrane cargo molecules. The protein is AP-1 complex subunit mu-2 (Ap1m2) of Mus musculus (Mouse).